A 361-amino-acid polypeptide reads, in one-letter code: Mannonate dehydratase 1 (361 aa).

This sequence belongs to the mannonate dehydratase family. Fe(2+) serves as cofactor. The cofactor is Mn(2+).

The catalysed reaction is D-mannonate = 2-dehydro-3-deoxy-D-gluconate + H2O. Its pathway is carbohydrate metabolism; pentose and glucuronate interconversion. Functionally, catalyzes the dehydration of D-mannonate. This chain is Mannonate dehydratase 1 (uxuA1), found in Halalkalibacterium halodurans (strain ATCC BAA-125 / DSM 18197 / FERM 7344 / JCM 9153 / C-125) (Bacillus halodurans).